A 72-amino-acid chain; its full sequence is Translation initiation factor IF-1 (72 aa).

An S1-like domain is found at 1-72 (MSKTDVVEIE…TKGRIIWRDK (72 aa)).

This sequence belongs to the IF-1 family. In terms of assembly, component of the 30S ribosomal translation pre-initiation complex which assembles on the 30S ribosome in the order IF-2 and IF-3, IF-1 and N-formylmethionyl-tRNA(fMet); mRNA recruitment can occur at any time during PIC assembly.

It is found in the cytoplasm. Its function is as follows. One of the essential components for the initiation of protein synthesis. Stabilizes the binding of IF-2 and IF-3 on the 30S subunit to which N-formylmethionyl-tRNA(fMet) subsequently binds. Helps modulate mRNA selection, yielding the 30S pre-initiation complex (PIC). Upon addition of the 50S ribosomal subunit IF-1, IF-2 and IF-3 are released leaving the mature 70S translation initiation complex. The protein is Translation initiation factor IF-1 of Lachnoclostridium phytofermentans (strain ATCC 700394 / DSM 18823 / ISDg) (Clostridium phytofermentans).